Here is a 290-residue protein sequence, read N- to C-terminus: MIKLLVLWLLILTIFLKSPTVEGDVSFRLSGATTTSYGVFIKNLREALPYERKVYNIPLLRSSISGSGRYTLLHLTNYADETISVAVDVTNVYIMGYLAGDVSYFFNEASATEAAKFVFKDAKKKVTLPYSGNYERLQTAAGKIRENIPLGLPALDSAITTLYYYTASSAASALLVLIQSTAESARYKFIEQQIGKRVDKTFLPSLATISLENNWSALSKQIQIASTNNGQFESPVVLIDGNNQRVSITNASARVVTSNIALLLNRNNIAAIGEDISMTLIGFEHGLYGI.

An N-terminal signal peptide occupies residues 1–23 (MIKLLVLWLLILTIFLKSPTVEG). Active-site residues include glutamate 183 and glutamate 212. Residues asparagine 214 and asparagine 250 are each glycosylated (N-linked (GlcNAc...) asparagine). The propeptide at 271–290 (AIGEDISMTLIGFEHGLYGI) is removed in mature form.

The protein belongs to the ribosome-inactivating protein family. Type 1 RIP subfamily. In terms of processing, appears to undergo proteolytic cleavage in the C-terminal to produce a shorter protein.

The catalysed reaction is Endohydrolysis of the N-glycosidic bond at one specific adenosine on the 28S rRNA.. Functionally, ribosome-inactivating protein of type 1, inhibits protein synthesis in animal cells. In Bryonia dioica (Red bryony), this protein is Ribosome-inactivating protein bryodin I.